The following is a 336-amino-acid chain: tRNA N6-adenosine threonylcarbamoyltransferase (336 aa).

Fe cation contacts are provided by histidine 111 and histidine 115. Residues 134–138, aspartate 167, glycine 180, aspartate 184, and asparagine 272 each bind substrate; that span reads VVSGG. Residue aspartate 300 coordinates Fe cation.

It belongs to the KAE1 / TsaD family. Fe(2+) is required as a cofactor.

The protein localises to the cytoplasm. The catalysed reaction is L-threonylcarbamoyladenylate + adenosine(37) in tRNA = N(6)-L-threonylcarbamoyladenosine(37) in tRNA + AMP + H(+). Its function is as follows. Required for the formation of a threonylcarbamoyl group on adenosine at position 37 (t(6)A37) in tRNAs that read codons beginning with adenine. Is involved in the transfer of the threonylcarbamoyl moiety of threonylcarbamoyl-AMP (TC-AMP) to the N6 group of A37, together with TsaE and TsaB. TsaD likely plays a direct catalytic role in this reaction. This chain is tRNA N6-adenosine threonylcarbamoyltransferase, found in Caldicellulosiruptor saccharolyticus (strain ATCC 43494 / DSM 8903 / Tp8T 6331).